The sequence spans 215 residues: Cytochrome b6 (215 aa).

Residues 32-52 (IFYCLGGITLTCFLVQVATGF) traverse the membrane as a helical segment. Cys-35 is a binding site for heme c. His-86 and His-100 together coordinate heme b. The next 3 helical transmembrane spans lie at 90–110 (ASMM…TGGF), 116–136 (LTWV…VTGY), and 186–206 (LHTF…FLMI). Heme b-binding residues include His-187 and His-202.

It belongs to the cytochrome b family. PetB subfamily. As to quaternary structure, the 4 large subunits of the cytochrome b6-f complex are cytochrome b6, subunit IV (17 kDa polypeptide, PetD), cytochrome f and the Rieske protein, while the 4 small subunits are PetG, PetL, PetM and PetN. The complex functions as a dimer. Requires heme b as cofactor. It depends on heme c as a cofactor.

The protein resides in the plastid. It is found in the chloroplast thylakoid membrane. Functionally, component of the cytochrome b6-f complex, which mediates electron transfer between photosystem II (PSII) and photosystem I (PSI), cyclic electron flow around PSI, and state transitions. This chain is Cytochrome b6, found in Oenothera elata subsp. hookeri (Hooker's evening primrose).